Consider the following 129-residue polypeptide: Fluoride-specific ion channel FluC (129 aa).

4 helical membrane passes run 6 to 26 (ILAIGSGGFIGAVLRAYFNGI), 35 to 55 (IPFGTLGVNLVGSFIMGILIA), 73 to 93 (TGVLGALTTYSTFAIESFLLL), and 98 to 118 (IALALANISLNAFGSILMAGG). Na(+)-binding residues include G77 and T80.

The protein belongs to the fluoride channel Fluc/FEX (TC 1.A.43) family.

It is found in the cell inner membrane. The enzyme catalyses fluoride(in) = fluoride(out). Na(+) is not transported, but it plays an essential structural role and its presence is essential for fluoride channel function. Functionally, fluoride-specific ion channel. Important for reducing fluoride concentration in the cell, thus reducing its toxicity. The protein is Fluoride-specific ion channel FluC of Sulfurimonas denitrificans (strain ATCC 33889 / DSM 1251) (Thiomicrospira denitrificans (strain ATCC 33889 / DSM 1251)).